A 790-amino-acid chain; its full sequence is Penicillin-binding protein 1A (790 aa).

Residues 1–6 (MYKSLL) are Cytoplasmic-facing. The helical; Signal-anchor for type II membrane protein transmembrane segment at 7–27 (FCLKIFVFLILVGCGITAYII) threads the bilayer. At 28-790 (YHYSRDLPDY…SKEDQSQEIY (763 aa)) the chain is on the periplasmic side. The segment at 49-220 (TRIYSRDGKL…SELNPERNYA (172 aa)) is transglycosylase. Residue E87 is the Proton donor; for transglycosylase activity of the active site. The tract at residues 398 to 711 (DVIVVEAIKE…SNVVLPIFID (314 aa)) is transpeptidase. The active-site Acyl-ester intermediate; for transpeptidase activity is the S457.

This sequence in the N-terminal section; belongs to the glycosyltransferase 51 family. It in the C-terminal section; belongs to the transpeptidase family.

The protein resides in the cell inner membrane. It carries out the reaction [GlcNAc-(1-&gt;4)-Mur2Ac(oyl-L-Ala-gamma-D-Glu-L-Lys-D-Ala-D-Ala)](n)-di-trans,octa-cis-undecaprenyl diphosphate + beta-D-GlcNAc-(1-&gt;4)-Mur2Ac(oyl-L-Ala-gamma-D-Glu-L-Lys-D-Ala-D-Ala)-di-trans,octa-cis-undecaprenyl diphosphate = [GlcNAc-(1-&gt;4)-Mur2Ac(oyl-L-Ala-gamma-D-Glu-L-Lys-D-Ala-D-Ala)](n+1)-di-trans,octa-cis-undecaprenyl diphosphate + di-trans,octa-cis-undecaprenyl diphosphate + H(+). It catalyses the reaction Preferential cleavage: (Ac)2-L-Lys-D-Ala-|-D-Ala. Also transpeptidation of peptidyl-alanyl moieties that are N-acyl substituents of D-alanine.. It participates in cell wall biogenesis; peptidoglycan biosynthesis. Its function is as follows. Cell wall formation. Synthesis of cross-linked peptidoglycan from the lipid intermediates. The enzyme has a penicillin-insensitive transglycosylase N-terminal domain (formation of linear glycan strands) and a penicillin-sensitive transpeptidase C-terminal domain (cross-linking of the peptide subunits). The protein is Penicillin-binding protein 1A (mrcA) of Rickettsia conorii (strain ATCC VR-613 / Malish 7).